The sequence spans 408 residues: Peptidase T (408 aa).

H78 contributes to the Zn(2+) binding site. Residue D80 is part of the active site. D141 is a binding site for Zn(2+). Residue E175 is the Proton acceptor of the active site. 3 residues coordinate Zn(2+): E176, D198, and H380.

It belongs to the peptidase M20B family. The cofactor is Zn(2+).

It is found in the cytoplasm. The enzyme catalyses Release of the N-terminal residue from a tripeptide.. Cleaves the N-terminal amino acid of tripeptides. This chain is Peptidase T, found in Clostridium botulinum (strain Langeland / NCTC 10281 / Type F).